The following is a 101-amino-acid chain: Iron-sulfur cluster assembly protein CyaY (101 aa).

It belongs to the frataxin family.

Involved in iron-sulfur (Fe-S) cluster assembly. May act as a regulator of Fe-S biogenesis. The chain is Iron-sulfur cluster assembly protein CyaY from Haemophilus influenzae (strain PittEE).